Here is a 267-residue protein sequence, read N- to C-terminus: 4-hydroxy-tetrahydrodipicolinate reductase (267 aa).

NAD(+) is bound by residues 8–13, Glu-34, 98–100, and 122–125; these read GAAGRM, GST, and APNM. The active-site Proton donor/acceptor is the His-155. Position 156 (His-156) interacts with (S)-2,3,4,5-tetrahydrodipicolinate. Catalysis depends on Lys-159, which acts as the Proton donor. 165 to 166 contacts (S)-2,3,4,5-tetrahydrodipicolinate; the sequence is GT.

It belongs to the DapB family.

The protein resides in the cytoplasm. The catalysed reaction is (S)-2,3,4,5-tetrahydrodipicolinate + NAD(+) + H2O = (2S,4S)-4-hydroxy-2,3,4,5-tetrahydrodipicolinate + NADH + H(+). The enzyme catalyses (S)-2,3,4,5-tetrahydrodipicolinate + NADP(+) + H2O = (2S,4S)-4-hydroxy-2,3,4,5-tetrahydrodipicolinate + NADPH + H(+). Its pathway is amino-acid biosynthesis; L-lysine biosynthesis via DAP pathway; (S)-tetrahydrodipicolinate from L-aspartate: step 4/4. Functionally, catalyzes the conversion of 4-hydroxy-tetrahydrodipicolinate (HTPA) to tetrahydrodipicolinate. The protein is 4-hydroxy-tetrahydrodipicolinate reductase of Syntrophotalea carbinolica (strain DSM 2380 / NBRC 103641 / GraBd1) (Pelobacter carbinolicus).